Reading from the N-terminus, the 151-residue chain is Ribosome maturation factor RimP (151 aa).

The protein belongs to the RimP family.

Its subcellular location is the cytoplasm. Its function is as follows. Required for maturation of 30S ribosomal subunits. The protein is Ribosome maturation factor RimP of Crocosphaera subtropica (strain ATCC 51142 / BH68) (Cyanothece sp. (strain ATCC 51142)).